A 339-amino-acid chain; its full sequence is Annexin A2 (339 aa).

Ser2 bears the N-acetylserine mark. Residues 2–24 (STVHEILCKLSLEGDHSTPASAY) form an S100A10-binding site region. Tyr24 carries the post-translational modification Phosphotyrosine; by SRC. Position 26 is a phosphoserine; by PKC (Ser26). Annexin repeat units lie at residues 33 to 104 (FDAE…GLLK) and 105 to 176 (TPAQ…ALAK). At Lys49 the chain carries N6-acetyllysine; alternate. A Glycyl lysine isopeptide (Lys-Gly) (interchain with G-Cter in SUMO1); alternate cross-link involves residue Lys49. Residue Lys49 forms a Glycyl lysine isopeptide (Lys-Gly) (interchain with G-Cter in SUMO2); alternate linkage. An N6-acetyllysine modification is found at Lys152. The residue at position 184 (Ser184) is a Phosphoserine. Annexin repeat units follow at residues 189–261 (ELID…NLVQ) and 265–336 (NKPL…YLCG). At Tyr199 the chain carries Phosphotyrosine. Lys227 is subject to N6-acetyllysine.

The protein belongs to the annexin family. Heterotetramer containing 2 light chains of S100A10/p11 and 2 heavy chains of ANXA2/p36. Interacts with ATP1B1. Interacts with DYSF. Interacts with COCH. Interacts (via repeat Annexin 1) with PCSK9 (via the C-terminal domain); the interaction inhibits the degradation of LDLR. Interacts with CEACAM1 (via the cytoplasmic domain); this interaction is regulated by phosphorylation of CEACAM1. Interacts with APPL2 and APPL1; targets APPL2 to endosomes and acting in parallel to RAB5A. Interacts with S100A4. May interact with UBAP2. Interacts with PLEKHG4B; this interaction is required for PLEKHG4B localization to cell-cell adhesions. In terms of assembly, (Microbial infection) Interacts with classical swine fever virus envelope glycoprotein E2. In terms of processing, ISGylated.

It is found in the secreted. The protein localises to the extracellular space. It localises to the extracellular matrix. Its subcellular location is the basement membrane. The protein resides in the melanosome. Functionally, calcium-regulated membrane-binding protein whose affinity for calcium is greatly enhanced by anionic phospholipids. It binds two calcium ions with high affinity. May be involved in heat-stress response. Inhibits PCSK9-enhanced LDLR degradation, probably reduces PCSK9 protein levels via a translational mechanism but also competes with LDLR for binding with PCSK9. Binds to endosomes damaged by phagocytosis of particulate wear debris and participates in endosomal membrane stabilization, thereby limiting NLRP3 inflammasome activation. Required for endothelial cell surface plasmin generation and may support fibrinolytic surveillance and neoangiogenesis. In terms of biological role, (Microbial infection) May serve as a receptor for classical swine fever virus (CSFV). Promotes CSFV infection. The chain is Annexin A2 (ANXA2) from Sus scrofa (Pig).